The sequence spans 312 residues: DNA-directed RNA polymerase subunit alpha (312 aa).

The tract at residues 1–226 (MIEFEKPNIT…EHLDLFTDLT (226 aa)) is alpha N-terminal domain (alpha-NTD). An alpha C-terminal domain (alpha-CTD) region spans residues 244–312 (DHVLERTIEE…DLGLGLKNDK (69 aa)).

Belongs to the RNA polymerase alpha chain family. Homodimer. The RNAP catalytic core consists of 2 alpha, 1 beta, 1 beta' and 1 omega subunit. When a sigma factor is associated with the core the holoenzyme is formed, which can initiate transcription.

The enzyme catalyses RNA(n) + a ribonucleoside 5'-triphosphate = RNA(n+1) + diphosphate. Functionally, DNA-dependent RNA polymerase catalyzes the transcription of DNA into RNA using the four ribonucleoside triphosphates as substrates. The sequence is that of DNA-directed RNA polymerase subunit alpha from Streptococcus gordonii (strain Challis / ATCC 35105 / BCRC 15272 / CH1 / DL1 / V288).